The sequence spans 280 residues: Dermonecrotic toxin LgSicTox-alphaIA1 (280 aa).

Histidine 12 is an active-site residue. Mg(2+) is bound by residues glutamate 32 and aspartate 34. Residue histidine 48 is the Nucleophile of the active site. Cysteine 52 and cysteine 58 form a disulfide bridge. Position 92 (aspartate 92) interacts with Mg(2+).

This sequence belongs to the arthropod phospholipase D family. Class I subfamily. Requires Mg(2+) as cofactor. In terms of tissue distribution, expressed by the venom gland.

It localises to the secreted. The catalysed reaction is an N-(acyl)-sphingosylphosphocholine = an N-(acyl)-sphingosyl-1,3-cyclic phosphate + choline. It carries out the reaction an N-(acyl)-sphingosylphosphoethanolamine = an N-(acyl)-sphingosyl-1,3-cyclic phosphate + ethanolamine. The enzyme catalyses a 1-acyl-sn-glycero-3-phosphocholine = a 1-acyl-sn-glycero-2,3-cyclic phosphate + choline. It catalyses the reaction a 1-acyl-sn-glycero-3-phosphoethanolamine = a 1-acyl-sn-glycero-2,3-cyclic phosphate + ethanolamine. Its function is as follows. Dermonecrotic toxins cleave the phosphodiester linkage between the phosphate and headgroup of certain phospholipids (sphingolipid and lysolipid substrates), forming an alcohol (often choline) and a cyclic phosphate. This toxin acts on sphingomyelin (SM). It may also act on ceramide phosphoethanolamine (CPE), lysophosphatidylcholine (LPC) and lysophosphatidylethanolamine (LPE), but not on lysophosphatidylserine (LPS), and lysophosphatidylglycerol (LPG). It acts by transphosphatidylation, releasing exclusively cyclic phosphate products as second products. Induces dermonecrosis, hemolysis, increased vascular permeability, edema, inflammatory response, and platelet aggregation. The chain is Dermonecrotic toxin LgSicTox-alphaIA1 from Loxosceles gaucho (Spider).